The following is a 337-amino-acid chain: Monoacylglycerol lipase abhd6-A (337 aa).

The Extracellular portion of the chain corresponds to 1–19 (MDLDVLNMFLVAGGTLLVP). Residues 20–42 (ILAFVTSFLLWPAALIKIYYWYW) form a helical; Signal-anchor for type II membrane protein membrane-spanning segment. Over 43–337 (RRALGMQVKF…QSTENNKKHE (295 aa)) the chain is Cytoplasmic. The 241-residue stretch at 73-313 (SVLMLHGFSA…CGHSVVMERP (241 aa)) folds into the AB hydrolase-1 domain. Catalysis depends on S148, which acts as the Nucleophile. Residues D278 and H306 each act as charge relay system in the active site.

Belongs to the AB hydrolase superfamily.

The protein resides in the late endosome membrane. It localises to the lysosome membrane. The protein localises to the mitochondrion membrane. It carries out the reaction Hydrolyzes glycerol monoesters of long-chain fatty acids.. The enzyme catalyses 1-octanoylglycerol + H2O = octanoate + glycerol + H(+). It catalyses the reaction 1-decanoylglycerol + H2O = decanoate + glycerol + H(+). The catalysed reaction is 1-dodecanoylglycerol + H2O = dodecanoate + glycerol + H(+). It carries out the reaction 1-tetradecanoylglycerol + H2O = tetradecanoate + glycerol + H(+). The enzyme catalyses 2-hexadecanoylglycerol + H2O = glycerol + hexadecanoate + H(+). It catalyses the reaction 2-(9Z-octadecenoyl)-glycerol + H2O = glycerol + (9Z)-octadecenoate + H(+). The catalysed reaction is 1-(9Z-octadecenoyl)-glycerol + H2O = glycerol + (9Z)-octadecenoate + H(+). It carries out the reaction 2-(9Z,12Z-octadecadienoyl)-glycerol + H2O = (9Z,12Z)-octadecadienoate + glycerol + H(+). The enzyme catalyses 2-(5Z,8Z,11Z,14Z-eicosatetraenoyl)-glycerol + H2O = glycerol + (5Z,8Z,11Z,14Z)-eicosatetraenoate + H(+). It catalyses the reaction 1-(5Z,8Z,11Z,14Z-eicosatetraenoyl)-glycerol + H2O = glycerol + (5Z,8Z,11Z,14Z)-eicosatetraenoate + H(+). The catalysed reaction is 1-(9Z,12Z-octadecadienoyl)-glycerol + H2O = (9Z,12Z)-octadecadienoate + glycerol + H(+). It carries out the reaction 3-(9Z-octadecenoyl)-sn-glycero-1-phospho-(3'-(9Z-octadecenoyl)-1'-sn-glycerol) + H2O = 3-(9Z-octadecenoyl)-sn-glycero-1-phospho-(1'-sn-glycerol) + (9Z)-octadecenoate + H(+). The enzyme catalyses (S,S)-2-(9Z-octadecenoyl)-sn-glycero-1-phospho-(2'-(9Z-octadecenoyl)-1'-sn-glycerol) + H2O = (S,S)-2-(9Z-octadecenoyl)-sn-glycero-1-phospho-(1'-sn-glycerol) + (9Z)-octadecenoate + H(+). It catalyses the reaction (R,R)-2-(9Z-octadecenoyl)-sn-glycero-3-phospho-(2'-(9Z-octadecenoyl)-3'-sn-glycerol) + H2O = (R,R)-2-(9Z-octadecenoyl)-sn-glycero-3-phospho-(3'-sn-glycerol) + (9Z)-octadecenoate + H(+). Lipase that preferentially hydrolysis medium-chain saturated monoacylglycerols including 2-arachidonoylglycerol. Through 2-arachidonoylglycerol degradation may regulate endocannabinoid signaling pathways. Also has a lysophosphatidyl lipase activity with a preference for lysophosphatidylglycerol among other lysophospholipids. Also able to degrade bis(monoacylglycero)phosphate (BMP) and constitutes the major enzyme for BMP catabolism. BMP, also known as lysobisphosphatidic acid, is enriched in late endosomes and lysosomes and plays a key role in the formation of intraluminal vesicles and in lipid sorting. The protein is Monoacylglycerol lipase abhd6-A (abhd6-a) of Xenopus laevis (African clawed frog).